Consider the following 129-residue polypeptide: Procyclic form-specific polypeptide A-beta (129 aa).

Positions 1-27 (MAPRSLYLLAVLLFSANLFAGVGFAAA) are cleaved as a signal peptide. A disordered region spans residues 27 to 111 (AAEGPEDKGL…PEPEPGAATL (85 aa)). A compositionally biased stretch (acidic residues) spans 53-104 (DDTNGTDPDPEPEPEPEPEPEPEPEPEPEPEPEPEPEPEPEPEPEPEPEPEP). N56 is a glycosylation site (N-linked (GlcNAc...) asparagine). Tandem repeats lie at residues 59-60 (DP), 61-62 (DP), 63-64 (EP), 65-66 (EP), 67-68 (EP), 69-70 (EP), 71-72 (EP), 73-74 (EP), 75-76 (EP), 77-78 (EP), 79-80 (EP), 81-82 (EP), 83-84 (EP), 85-86 (EP), 87-88 (EP), 89-90 (EP), 91-92 (EP), 93-94 (EP), 95-96 (EP), 97-98 (EP), 99-100 (EP), 101-102 (EP), 103-104 (EP), and 105-106 (EP). The tract at residues 59-106 (DPDPEPEPEPEPEPEPEPEPEPEPEPEPEPEPEPEPEPEPEPEPEPEP) is 24 X 2 AA tandem repeats of [DE]-P. The GPI-anchor amidated glycine moiety is linked to residue G107. The propeptide occupies 108 to 129 (AATLKSVALPFAIAAVGLVAAF).

It localises to the cell membrane. Functionally, major surface antigen of procyclic forms. In Trypanosoma brucei brucei, this protein is Procyclic form-specific polypeptide A-beta (PARPA-BETA).